The chain runs to 323 residues: Fos-related antigen 2 (323 aa).

The segment covering 1–27 has biased composition (low complexity); that stretch reads MYQDYPGSFDTSSRGSSGSPGHPEPYS. The tract at residues 1-31 is disordered; it reads MYQDYPGSFDTSSRGSSGSPGHPEPYSAGAA. The region spanning 124–187 is the bZIP domain; that stretch reads EEKRRIRRER…EKLEFMLVAH (64 aa). The segment at 126 to 128 is basic motif; it reads KRR. The interval 129-136 is leucine-zipper; the sequence is IRRERNKL. 2 disordered regions span residues 194-214 and 288-323; these read SPEERRSPPTSSLQSVRTGAS and ESPLSPSESCSKAHRRSSSSGDQSSDSLNSPTLLAL. Low complexity predominate over residues 305-317; sequence SSSGDQSSDSLNS.

Belongs to the bZIP family. Fos subfamily. As to quaternary structure, heterodimer with JUN.

The protein resides in the nucleus. This is Fos-related antigen 2 (FOSL2) from Gallus gallus (Chicken).